A 278-amino-acid polypeptide reads, in one-letter code: 3-oxoacyl-[acyl-carrier-protein] reductase (278 aa).

Residues T13, R14, I16, S36, S40, T44, D66, F67, E77, G122, Q125, and E126 each contribute to the NADP(+) site. S182 acts as the Proton donor in catalysis. Residues Y198, K202, L230, and V231 each contribute to the NADP(+) site. Y198 serves as the catalytic Proton acceptor. The Lowers pKa of active site Tyr role is filled by K202.

Belongs to the short-chain dehydrogenases/reductases (SDR) family.

The protein localises to the mitochondrion. It catalyses the reaction a (3R)-hydroxyacyl-[ACP] + NADP(+) = a 3-oxoacyl-[ACP] + NADPH + H(+). Its pathway is lipid metabolism; fatty acid biosynthesis. Its function is as follows. Involved in biosynthesis of fatty acids in mitochondria. The sequence is that of 3-oxoacyl-[acyl-carrier-protein] reductase (OAR1) from Saccharomyces cerevisiae (strain ATCC 204508 / S288c) (Baker's yeast).